The sequence spans 315 residues: Intradiol ring-cleavage dioxygenase prcA (315 aa).

Residues tyrosine 166, tyrosine 200, histidine 224, and histidine 226 each coordinate Fe cation. Residues 287–315 (KKHHPNPNSAPPVSSFERFNKASKTQEKL) are disordered. Positions 304 to 315 (RFNKASKTQEKL) are enriched in basic and acidic residues.

The protein belongs to the intradiol ring-cleavage dioxygenase family. In terms of assembly, homodimer. It depends on Fe(3+) as a cofactor.

It carries out the reaction 3,4-dihydroxybenzoate + O2 = 3-carboxy-cis,cis-muconate + 2 H(+). In terms of biological role, intradiol ring-cleavage dioxygenase; part of the benzoic acid degradation pathway also known as the protocatechuic acid pathway. Benzoic acid debradation begins with the conversion of benzoic acid into 4-hydroxybenzoic acid through hydroxylation by the benzoate-4-monooxygenase bphA, and its partner NADPH-cytochrome P450 reductase cprA which act as a mediator in electron donation from NADPH. 4-Hydroxybenzoic acid is then converted into 3,4-dihydroxybenzoic acid (also called protocatechuic acid) by the p-hydroxybenzoate-m-hydroxylase phhA. Protocatechuic acid is converted into 3-carboxy-cis,cis-muconic acid by the intradiol ring-cleavage dioxygenase prcA, which is further metabolized through the 3-oxoadipate pathway to finally enter the tricarboxylic acid cycle (TCA). The protein is Intradiol ring-cleavage dioxygenase prcA of Aspergillus niger (strain ATCC MYA-4892 / CBS 513.88 / FGSC A1513).